The following is a 170-amino-acid chain: Putative 3-methyladenine DNA glycosylase (170 aa).

It belongs to the DNA glycosylase MPG family.

The sequence is that of Putative 3-methyladenine DNA glycosylase from Sodalis glossinidius.